The following is a 620-amino-acid chain: Acetylcholinesterase 1 (620 aa).

A signal peptide spans 1-31 (MRYSLLFFIFLPCVITAVDLIHLHDGSPLFG). N-linked (GlcNAc...) asparagine glycosylation occurs at Asn-74. An intrachain disulfide couples Cys-82 to Cys-109. Catalysis depends on Ser-216, which acts as the Acyl-ester intermediate. The cysteines at positions 270 and 286 are disulfide-linked. N-linked (GlcNAc...) asparagine glycosylation is present at Asn-272. Catalysis depends on charge relay system residues Glu-346 and His-468. Cys-430 and Cys-558 are oxidised to a cystine. 2 N-linked (GlcNAc...) asparagine glycosylation sites follow: Asn-486 and Asn-536.

Belongs to the type-B carboxylesterase/lipase family. As to quaternary structure, oligomer composed of disulfide-linked homodimers.

It is found in the synapse. It localises to the secreted. The protein localises to the cell membrane. It catalyses the reaction acetylcholine + H2O = choline + acetate + H(+). Its function is as follows. Rapidly hydrolyzes choline released into the synapse. The sequence is that of Acetylcholinesterase 1 (ace-1) from Caenorhabditis briggsae.